A 210-amino-acid polypeptide reads, in one-letter code: Probable GTP-binding protein EngB (210 aa).

The EngB-type G domain maps to 25 to 199 (CGIEVAFAGR…RQKLDSWFSE (175 aa)). GTP is bound by residues 33–40 (GRSNAGKS), 60–64 (GRTQL), 78–81 (DLPG), 145–148 (TKAD), and 178–180 (FSS). 2 residues coordinate Mg(2+): Ser40 and Thr62.

It belongs to the TRAFAC class TrmE-Era-EngA-EngB-Septin-like GTPase superfamily. EngB GTPase family. The cofactor is Mg(2+).

In terms of biological role, necessary for normal cell division and for the maintenance of normal septation. The protein is Probable GTP-binding protein EngB of Salmonella agona (strain SL483).